The chain runs to 136 residues: Large ribosomal subunit protein bL20 (136 aa).

The protein belongs to the bacterial ribosomal protein bL20 family.

In terms of biological role, binds directly to 23S ribosomal RNA and is necessary for the in vitro assembly process of the 50S ribosomal subunit. It is not involved in the protein synthesizing functions of that subunit. In Tropheryma whipplei (strain TW08/27) (Whipple's bacillus), this protein is Large ribosomal subunit protein bL20.